The following is a 272-amino-acid chain: Phosphate import ATP-binding protein PstB 1 (272 aa).

The 242-residue stretch at 26–267 (LEIRNLDLRY…PKKRKTEDYI (242 aa)) folds into the ABC transporter domain. 58–65 (GPSGCGKS) serves as a coordination point for ATP.

The protein belongs to the ABC transporter superfamily. Phosphate importer (TC 3.A.1.7) family. In terms of assembly, the complex is composed of two ATP-binding proteins (PstB), two transmembrane proteins (PstC and PstA) and a solute-binding protein (PstS).

The protein localises to the cell inner membrane. The catalysed reaction is phosphate(out) + ATP + H2O = ADP + 2 phosphate(in) + H(+). Functionally, part of the ABC transporter complex PstSACB involved in phosphate import. Responsible for energy coupling to the transport system. This is Phosphate import ATP-binding protein PstB 1 from Shewanella oneidensis (strain ATCC 700550 / JCM 31522 / CIP 106686 / LMG 19005 / NCIMB 14063 / MR-1).